Reading from the N-terminus, the 1072-residue chain is DNA-directed RNA polymerase subunit beta (1072 aa).

It belongs to the RNA polymerase beta chain family. As to quaternary structure, in plastids the minimal PEP RNA polymerase catalytic core is composed of four subunits: alpha, beta, beta', and beta''. When a (nuclear-encoded) sigma factor is associated with the core the holoenzyme is formed, which can initiate transcription.

The protein resides in the plastid. It is found in the chloroplast. The catalysed reaction is RNA(n) + a ribonucleoside 5'-triphosphate = RNA(n+1) + diphosphate. DNA-dependent RNA polymerase catalyzes the transcription of DNA into RNA using the four ribonucleoside triphosphates as substrates. This is DNA-directed RNA polymerase subunit beta from Oenothera elata subsp. hookeri (Hooker's evening primrose).